The following is a 139-amino-acid chain: Putative pre-16S rRNA nuclease (139 aa).

This sequence belongs to the YqgF nuclease family.

The protein resides in the cytoplasm. In terms of biological role, could be a nuclease involved in processing of the 5'-end of pre-16S rRNA. The sequence is that of Putative pre-16S rRNA nuclease from Streptococcus thermophilus (strain CNRZ 1066).